A 63-amino-acid chain; its full sequence is Cytochrome c oxidase subunit 7C, mitochondrial (63 aa).

A mitochondrion-targeting transit peptide spans 1–16; it reads MLGQSIRRFTTSVVRR. Residues 17–33 are Mitochondrial matrix-facing; the sequence is SHYEEGPGKNIPFSVEN. An N6-acetyllysine; alternate modification is found at Lys-25. Lys-25 bears the N6-succinyllysine; alternate mark. A helical transmembrane segment spans residues 34–60; it reads KWRLLAMMTLFFGSGFAAPFFIVRHQL. At 61-63 the chain is on the mitochondrial intermembrane side; that stretch reads LKK.

It belongs to the cytochrome c oxidase VIIc family. In terms of assembly, component of the cytochrome c oxidase (complex IV, CIV), a multisubunit enzyme composed of 14 subunits. The complex is composed of a catalytic core of 3 subunits MT-CO1, MT-CO2 and MT-CO3, encoded in the mitochondrial DNA, and 11 supernumerary subunits COX4I1 (or COX4I2), COX5A, COX5B, COX6A2 (or COX6A1), COX6B1 (or COX6B2), COX6C, COX7A1 (or COX7A2), COX7B, COX7C, COX8B and NDUFA4, which are encoded in the nuclear genome. The complex exists as a monomer or a dimer and forms supercomplexes (SCs) in the inner mitochondrial membrane with NADH-ubiquinone oxidoreductase (complex I, CI) and ubiquinol-cytochrome c oxidoreductase (cytochrome b-c1 complex, complex III, CIII), resulting in different assemblies (supercomplex SCI(1)III(2)IV(1) and megacomplex MCI(2)III(2)IV(2)). Interacts with RAB5IF. In terms of tissue distribution, liver, heart, muscle and brain, contain the same isoform of COX VIIc, but at different concentrations.

Its subcellular location is the mitochondrion inner membrane. It functions in the pathway energy metabolism; oxidative phosphorylation. Its function is as follows. Component of the cytochrome c oxidase, the last enzyme in the mitochondrial electron transport chain which drives oxidative phosphorylation. The respiratory chain contains 3 multisubunit complexes succinate dehydrogenase (complex II, CII), ubiquinol-cytochrome c oxidoreductase (cytochrome b-c1 complex, complex III, CIII) and cytochrome c oxidase (complex IV, CIV), that cooperate to transfer electrons derived from NADH and succinate to molecular oxygen, creating an electrochemical gradient over the inner membrane that drives transmembrane transport and the ATP synthase. Cytochrome c oxidase is the component of the respiratory chain that catalyzes the reduction of oxygen to water. Electrons originating from reduced cytochrome c in the intermembrane space (IMS) are transferred via the dinuclear copper A center (CU(A)) of subunit 2 and heme A of subunit 1 to the active site in subunit 1, a binuclear center (BNC) formed by heme A3 and copper B (CU(B)). The BNC reduces molecular oxygen to 2 water molecules using 4 electrons from cytochrome c in the IMS and 4 protons from the mitochondrial matrix. This Bos taurus (Bovine) protein is Cytochrome c oxidase subunit 7C, mitochondrial (COX7C).